We begin with the raw amino-acid sequence, 188 residues long: Ras-related protein Rap-1 (188 aa).

12-19 (GSGGVGKS) lines the GTP pocket. Residues 34–42 (YDPTIEDSY) carry the Effector region motif. GTP contacts are provided by residues 59–63 (DTAGT) and 118–121 (NKCD). Cysteine 185 is subject to Cysteine methyl ester. Cysteine 185 carries the S-geranylgeranyl cysteine lipid modification. Positions 186-188 (ILL) are cleaved as a propeptide — removed in mature form.

The protein belongs to the small GTPase superfamily. Ras family.

Its subcellular location is the cell membrane. It catalyses the reaction GTP + H2O = GDP + phosphate + H(+). This Physarum polycephalum (Slime mold) protein is Ras-related protein Rap-1 (RAP1).